The chain runs to 439 residues: Synaptotagmin-B (439 aa).

Residues 1 to 74 lie on the Vesicular side of the membrane; sequence MQAEMNQSAE…KEKFMNELQK (74 aa). N-linked (GlcNAc...) asparagine glycans are attached at residues asparagine 6 and asparagine 46. A helical transmembrane segment spans residues 75 to 101; that stretch reads IPLPPWALIAIAIVSGLLLLTCCLCIC. Topologically, residues 102 to 439 are cytoplasmic; the sequence is KKCCCKKKKN…EVDVALGLKK (338 aa). The tract at residues 113–155 is disordered; that stretch reads KEKGKGKKNDINMKDVKGSGGNQDDDDAETGLTEGEDKEEEAK. Residues 119 to 129 show a composition bias toward basic and acidic residues; that stretch reads KKNDINMKDVK. The segment covering 135 to 151 has biased composition (acidic residues); sequence QDDDDAETGLTEGEDKE. A phospholipid binding region spans residues 153–399; it reads EAKEEEKLGK…AIGKIFVGSN (247 aa). C2 domains follow at residues 159 to 278 and 290 to 423; these read KLGK…EEWR and KLGD…AQWH. Leucine 189, aspartate 190, aspartate 196, aspartate 248, phenylalanine 249, aspartate 250, serine 253, lysine 254, aspartate 256, aspartate 321, aspartate 327, aspartate 381, aspartate 383, and aspartate 389 together coordinate Ca(2+).

Belongs to the synaptotagmin family. Homodimer or homotrimer (possible). It depends on Ca(2+) as a cofactor. Spinal cord, brainstem, midbrain and electric organ.

Its subcellular location is the cytoplasmic vesicle. The protein localises to the secretory vesicle. The protein resides in the synaptic vesicle membrane. It localises to the synapse. In terms of biological role, may have a regulatory role in the membrane interactions during trafficking of synaptic vesicles at the active zone of the synapse. It binds acidic phospholipids with a specificity that requires the presence of both an acidic head group and a diacyl backbone. The polypeptide is Synaptotagmin-B (P65-B) (Diplobatis ommata (Ocellated electric ray)).